Consider the following 1577-residue polypeptide: Pentafunctional AROM polypeptide (1577 aa).

The tract at residues 1–392 (MASVGLEKVN…YGTSAHVVSD (392 aa)) is 3-dehydroquinate synthase. Residues 80 to 83 (ETYK), 111 to 113 (GGV), and D116 contribute to the NAD(+) site. R127 contributes to the 7-phospho-2-dehydro-3-deoxy-D-arabino-heptonate binding site. 136–137 (TS) is a binding site for NAD(+). 7-phospho-2-dehydro-3-deoxy-D-arabino-heptonate is bound by residues D143 and K149. K158 serves as a coordination point for NAD(+). 7-phospho-2-dehydro-3-deoxy-D-arabino-heptonate is bound at residue N159. Residues 176-179 (WLET) and N187 contribute to the NAD(+) site. E191 contributes to the Zn(2+) binding site. 7-phospho-2-dehydro-3-deoxy-D-arabino-heptonate contacts are provided by residues 191-194 (EVIK) and K258. Catalysis depends on E268, which acts as the Proton acceptor; for 3-dehydroquinate synthase activity. 7-phospho-2-dehydro-3-deoxy-D-arabino-heptonate is bound by residues 272 to 276 (RNLLN) and H279. Residue H279 participates in Zn(2+) binding. The active-site Proton acceptor; for 3-dehydroquinate synthase activity is the H283. Residues H295 and K364 each contribute to the 7-phospho-2-dehydro-3-deoxy-D-arabino-heptonate site. H295 serves as a coordination point for Zn(2+). The tract at residues 405-863 (VYPFTDVRSS…WDVLHSRLGA (459 aa)) is EPSP synthase. Catalysis depends on C845, which acts as the For EPSP synthase activity. The shikimate kinase stretch occupies residues 882–1071 (VVLIGMRAAG…VPVKRSTFVC (190 aa)). ATP is bound at residue 886 to 893 (GMRAAGKS). A 3-dehydroquinase region spans residues 1072-1284 (LTFQNLLPEM…AAPGQLTLRQ (213 aa)). The Proton acceptor; for 3-dehydroquinate dehydratase activity role is filled by H1189. The Schiff-base intermediate with substrate; for 3-dehydroquinate dehydratase activity role is filled by K1218. The tract at residues 1297–1577 (PKKMFVVGSP…APVYDAVTQE (281 aa)) is shikimate dehydrogenase.

It in the N-terminal section; belongs to the sugar phosphate cyclases superfamily. Dehydroquinate synthase family. The protein in the 2nd section; belongs to the EPSP synthase family. This sequence in the 3rd section; belongs to the shikimate kinase family. In the 4th section; belongs to the type-I 3-dehydroquinase family. It in the C-terminal section; belongs to the shikimate dehydrogenase family. In terms of assembly, homodimer. Zn(2+) serves as cofactor.

The protein localises to the cytoplasm. It catalyses the reaction 7-phospho-2-dehydro-3-deoxy-D-arabino-heptonate = 3-dehydroquinate + phosphate. It carries out the reaction 3-dehydroquinate = 3-dehydroshikimate + H2O. The catalysed reaction is shikimate + NADP(+) = 3-dehydroshikimate + NADPH + H(+). The enzyme catalyses shikimate + ATP = 3-phosphoshikimate + ADP + H(+). It catalyses the reaction 3-phosphoshikimate + phosphoenolpyruvate = 5-O-(1-carboxyvinyl)-3-phosphoshikimate + phosphate. It functions in the pathway metabolic intermediate biosynthesis; chorismate biosynthesis; chorismate from D-erythrose 4-phosphate and phosphoenolpyruvate: step 2/7. Its pathway is metabolic intermediate biosynthesis; chorismate biosynthesis; chorismate from D-erythrose 4-phosphate and phosphoenolpyruvate: step 3/7. The protein operates within metabolic intermediate biosynthesis; chorismate biosynthesis; chorismate from D-erythrose 4-phosphate and phosphoenolpyruvate: step 4/7. It participates in metabolic intermediate biosynthesis; chorismate biosynthesis; chorismate from D-erythrose 4-phosphate and phosphoenolpyruvate: step 5/7. It functions in the pathway metabolic intermediate biosynthesis; chorismate biosynthesis; chorismate from D-erythrose 4-phosphate and phosphoenolpyruvate: step 6/7. Functionally, the AROM polypeptide catalyzes 5 consecutive enzymatic reactions in prechorismate polyaromatic amino acid biosynthesis. This Eremothecium gossypii (strain ATCC 10895 / CBS 109.51 / FGSC 9923 / NRRL Y-1056) (Yeast) protein is Pentafunctional AROM polypeptide.